The following is a 289-amino-acid chain: ATP phosphoribosyltransferase (289 aa).

Belongs to the ATP phosphoribosyltransferase family. Long subfamily. The cofactor is Mg(2+).

Its subcellular location is the cytoplasm. The catalysed reaction is 1-(5-phospho-beta-D-ribosyl)-ATP + diphosphate = 5-phospho-alpha-D-ribose 1-diphosphate + ATP. The protein operates within amino-acid biosynthesis; L-histidine biosynthesis; L-histidine from 5-phospho-alpha-D-ribose 1-diphosphate: step 1/9. Its activity is regulated as follows. Feedback inhibited by histidine. Catalyzes the condensation of ATP and 5-phosphoribose 1-diphosphate to form N'-(5'-phosphoribosyl)-ATP (PR-ATP). Has a crucial role in the pathway because the rate of histidine biosynthesis seems to be controlled primarily by regulation of HisG enzymatic activity. In Solibacter usitatus (strain Ellin6076), this protein is ATP phosphoribosyltransferase.